Reading from the N-terminus, the 458-residue chain is Serine protease Do-like HtrB (458 aa).

The segment covering methionine 1 to histidine 18 has biased composition (basic and acidic residues). The tract at residues methionine 1–valine 42 is disordered. At methionine 1 to arginine 71 the chain is on the cytoplasmic side. A helical transmembrane segment spans residues alanine 72–alanine 92. Residues proline 93 to serine 458 lie on the Extracellular side of the membrane. A disordered region spans residues glutamine 146–glycine 170. Catalysis depends on charge relay system residues histidine 187, aspartate 217, and serine 298. Residues glycine 296–serine 298 and leucine 352–methionine 356 contribute to the substrate site. The PDZ domain occupies methionine 356 to glycine 440.

It belongs to the peptidase S1C family.

Its subcellular location is the cell membrane. It catalyses the reaction Acts on substrates that are at least partially unfolded. The cleavage site P1 residue is normally between a pair of hydrophobic residues, such as Val-|-Val.. Its function is as follows. Degrades abnormal exported proteins and responsible for the propeptide processing of a natural pro-protein and for the maturation of a native protein. It also plays a prominent role in stress (heat shock, ethanol, puromycin and NaCl) resistance during active exponential growth. In Bacillus subtilis (strain 168), this protein is Serine protease Do-like HtrB (htrB).